Reading from the N-terminus, the 464-residue chain is MNRIGSLYFNTKFVKSKVCNSTYKAFPLIINHHTMASFQIQIISETLIKPSSPTPPSLKQHRFSDYDKTMHHMYIPAAFLYTSHGHGITSTDEVSQLLKNSLSKTLSHYYHFAGRLVGDSHVDCNDMGVKLFEVRVRCPMTEVLKRPNTDAKDLVFPKGLPWSMGEGDILVVAQITYFDCGGIAISTDMSHKIVDVSSIATFMKDWAAMARNSSHQPYPVIVSPTILPMDDIPATAEDDIMKENICQSRRFLFDDSKIVELKAMAANSGVENPTRVEVVTAILHKCAVTASTTALGSFMPNILLLAVNLRSIVSPPLANTSIGNISSCCAISVTHENQMKFPLLVGELRRSKTKLLQNYGKQLKKSELLFLNGTDKAQKLSDGDSFDCFIFTSWCRSPLYEVDFGWGRPVQVYVPSCPIKNTFRLTDTPAQDGIQALVTLEENVMPIFENDEELLAFASLIKDS.

Residues His191 and Asp403 each act as proton acceptor in the active site.

Belongs to the plant acyltransferase family. As to quaternary structure, monomer. In terms of tissue distribution, mainly expressed in roots.

Its subcellular location is the cytoplasm. The catalysed reaction is 17,18-epoxy-17-hydroxycur-19-ene + malonyl-CoA = prestrychnine + CoA. Its pathway is alkaloid biosynthesis. Its function is as follows. Malonylransferase involved in the biosynthesis of curare monoterpene indole alkaloids (MIAs), natural products such as strychnine, a neurotoxic compound used as a pesticide to control rodents, and its pharmacologically active derivatives, including brucine, used to regulate blood pressure. Curare alkaloids act as animal glycine receptor antagonists. Catalyzes the conversion of 17,18-epoxy-17-hydroxycur-19-ene (Wieland-Gumlich aldehyde) to prestrychnine, which is spontaneously converted into strychnine and isostrychnine. This Strychnos nux-vomica (Poison nut) protein is 17,18-epoxy-17-hydroxycur-19-ene N-malonyltransferase.